Reading from the N-terminus, the 1114-residue chain is Kinesin-like protein KIN-12B (1114 aa).

Residues 1 to 119 (MRSLFSSKLS…GGGGGDSGVQ (119 aa)) form a disordered region. Positions 98–107 (SAASPAPEGA) are enriched in low complexity. The region spanning 117-459 (GVQVVVRVRP…LRFAHRAKDI (343 aa)) is the Kinesin motor domain. An ATP-binding site is contributed by 197–204 (GQTGSGKT). Coiled-coil stretches lie at residues 772 to 810 (VLSAKIELERIQEELERYRNFKDEKEVLLEEIQHLKNQL) and 999 to 1043 (ELLV…DQEV). Residues 1055–1065 (LPSNVVQSPEP) are compositionally biased toward polar residues. Residues 1055-1081 (LPSNVVQSPEPSETGPARYDTGGSFGD) are disordered.

This sequence belongs to the TRAFAC class myosin-kinesin ATPase superfamily. Kinesin family. KIN-12 subfamily.

The chain is Kinesin-like protein KIN-12B from Oryza sativa subsp. japonica (Rice).